A 309-amino-acid polypeptide reads, in one-letter code: Spermatid maturation protein 1 (309 aa).

Residues 29-49 traverse the membrane as a helical segment; that stretch reads VLLLLGLIICINISINIVTLL. Residues 209 to 231 are disordered; that stretch reads PPPPSPEAPSHKNGGEGAVPEAE. Positions 259 to 285 form a coiled coil; sequence RIVYDARDMRRRLRELTREVEALSGCY.

Its subcellular location is the membrane. It is found in the cytoplasm. Functionally, required for proper cytoplasm removal during spermatogenesis. The chain is Spermatid maturation protein 1 (SPEM1) from Homo sapiens (Human).